We begin with the raw amino-acid sequence, 612 residues long: Dihydroxy-acid dehydratase (612 aa).

Asp-81 serves as a coordination point for Mg(2+). Cys-122 is a [2Fe-2S] cluster binding site. Mg(2+)-binding residues include Asp-123 and Lys-124. At Lys-124 the chain carries N6-carboxylysine. Cys-195 is a [2Fe-2S] cluster binding site. Glu-492 is a binding site for Mg(2+). The active-site Proton acceptor is Ser-518.

The protein belongs to the IlvD/Edd family. In terms of assembly, homodimer. [2Fe-2S] cluster serves as cofactor. The cofactor is Mg(2+).

The enzyme catalyses (2R)-2,3-dihydroxy-3-methylbutanoate = 3-methyl-2-oxobutanoate + H2O. It carries out the reaction (2R,3R)-2,3-dihydroxy-3-methylpentanoate = (S)-3-methyl-2-oxopentanoate + H2O. It participates in amino-acid biosynthesis; L-isoleucine biosynthesis; L-isoleucine from 2-oxobutanoate: step 3/4. The protein operates within amino-acid biosynthesis; L-valine biosynthesis; L-valine from pyruvate: step 3/4. Functionally, functions in the biosynthesis of branched-chain amino acids. Catalyzes the dehydration of (2R,3R)-2,3-dihydroxy-3-methylpentanoate (2,3-dihydroxy-3-methylvalerate) into 2-oxo-3-methylpentanoate (2-oxo-3-methylvalerate) and of (2R)-2,3-dihydroxy-3-methylbutanoate (2,3-dihydroxyisovalerate) into 2-oxo-3-methylbutanoate (2-oxoisovalerate), the penultimate precursor to L-isoleucine and L-valine, respectively. The protein is Dihydroxy-acid dehydratase of Kocuria rhizophila (strain ATCC 9341 / DSM 348 / NBRC 103217 / DC2201).